The sequence spans 126 residues: Glycine cleavage system H protein (126 aa).

The region spanning 22–104 is the Lipoyl-binding domain; sequence VATIGITEYA…YEKAWMVKVE (83 aa). K63 carries the N6-lipoyllysine modification.

Belongs to the GcvH family. In terms of assembly, the glycine cleavage system is composed of four proteins: P, T, L and H. (R)-lipoate is required as a cofactor.

Its function is as follows. The glycine cleavage system catalyzes the degradation of glycine. The H protein shuttles the methylamine group of glycine from the P protein to the T protein. Is also involved in protein lipoylation via its role as an octanoyl/lipoyl carrier protein intermediate. The sequence is that of Glycine cleavage system H protein from Staphylococcus aureus (strain JH1).